Consider the following 530-residue polypeptide: Ubiquitin carboxyl-terminal hydrolase 17-like protein 5 (530 aa).

The USP domain maps to 80-375 (AGLQNMGNTC…QAYVLFYIQK (296 aa)). Cys89 acts as the Nucleophile in catalysis. His334 acts as the Proton acceptor in catalysis. Basic and acidic residues-rich tracts occupy residues 382–392 (SESVSRGREPR) and 398–412 (DTDR…KRDH). Disordered regions lie at residues 382–412 (SESV…KRDH) and 477–530 (NHHP…LVCQ). Polar residues predominate over residues 493–505 (TPTHQESMNTGTL). Residues 510–524 (GRARRSKGKNKHSKR) show a composition bias toward basic residues.

It belongs to the peptidase C19 family. USP17 subfamily.

Its subcellular location is the nucleus. It localises to the endoplasmic reticulum. The catalysed reaction is Thiol-dependent hydrolysis of ester, thioester, amide, peptide and isopeptide bonds formed by the C-terminal Gly of ubiquitin (a 76-residue protein attached to proteins as an intracellular targeting signal).. Its function is as follows. Deubiquitinating enzyme that removes conjugated ubiquitin from specific proteins to regulate different cellular processes that may include cell proliferation, progression through the cell cycle, apoptosis, cell migration, and the cellular response to viral infection. The polypeptide is Ubiquitin carboxyl-terminal hydrolase 17-like protein 5 (USP17L5) (Homo sapiens (Human)).